A 968-amino-acid polypeptide reads, in one-letter code: Protein translocase subunit SecA (968 aa).

Residues Gln86, 104-108 (GEGKT), and Asp494 each bind ATP. The interval 835–968 (PAESAEESTD…RAAKAAKKRR (134 aa)) is disordered. Composition is skewed to low complexity over residues 883-892 (ARVATRPAAE) and 910-923 (SAPSSDGGSSFSEG). A compositionally biased stretch (basic residues) spans 956 to 968 (ARRRAAKAAKKRR).

It belongs to the SecA family. As to quaternary structure, monomer and homodimer. Part of the essential Sec protein translocation apparatus which comprises SecA, SecYEG and auxiliary proteins SecDF. Other proteins may also be involved.

The protein localises to the cell membrane. It localises to the cytoplasm. It catalyses the reaction ATP + H2O + cellular proteinSide 1 = ADP + phosphate + cellular proteinSide 2.. In terms of biological role, part of the Sec protein translocase complex. Interacts with the SecYEG preprotein conducting channel. Has a central role in coupling the hydrolysis of ATP to the transfer of proteins into and across the cell membrane, serving as an ATP-driven molecular motor driving the stepwise translocation of polypeptide chains across the membrane. The chain is Protein translocase subunit SecA from Beutenbergia cavernae (strain ATCC BAA-8 / DSM 12333 / CCUG 43141 / JCM 11478 / NBRC 16432 / NCIMB 13614 / HKI 0122).